A 157-amino-acid chain; its full sequence is Arginine repressor (157 aa).

The protein belongs to the ArgR family.

Its subcellular location is the cytoplasm. The protein operates within amino-acid biosynthesis; L-arginine biosynthesis [regulation]. Functionally, regulates arginine biosynthesis genes. This Bacteroides fragilis (strain YCH46) protein is Arginine repressor.